The primary structure comprises 151 residues: Glutamate mutase sigma subunit 1 (151 aa).

In terms of domain architecture, B12-binding spans 7–140 (PRTVILGVIG…EMLREDLQLT (134 aa)). Residues 17-21 (SDAHV), histidine 20, 65-67 (SSL), and 96-100 (NLAVG) contribute to the adenosylcob(III)alamin site.

Belongs to the methylaspartate mutase GlmS subunit family. In terms of assembly, heterotetramer composed of 2 epsilon subunits (GlmE) and 2 sigma subunits (GlmS). GlmE exists as a homodimer and GlmS as a monomer. Adenosylcob(III)alamin is required as a cofactor.

The catalysed reaction is (2S,3S)-3-methyl-L-aspartate = L-glutamate. The protein operates within amino-acid degradation; L-glutamate degradation via mesaconate pathway; acetate and pyruvate from L-glutamate: step 1/4. In terms of biological role, catalyzes the carbon skeleton rearrangement of L-glutamate to L-threo-3-methylaspartate ((2S,3S)-3-methylaspartate). The protein is Glutamate mutase sigma subunit 1 of Haloarcula marismortui (strain ATCC 43049 / DSM 3752 / JCM 8966 / VKM B-1809) (Halobacterium marismortui).